The chain runs to 306 residues: Ribonuclease Z (306 aa).

Zn(2+)-binding residues include histidine 63, histidine 65, aspartate 67, histidine 68, histidine 141, aspartate 211, and histidine 269. Aspartate 67 functions as the Proton acceptor in the catalytic mechanism.

The protein belongs to the RNase Z family. In terms of assembly, homodimer. It depends on Zn(2+) as a cofactor.

The enzyme catalyses Endonucleolytic cleavage of RNA, removing extra 3' nucleotides from tRNA precursor, generating 3' termini of tRNAs. A 3'-hydroxy group is left at the tRNA terminus and a 5'-phosphoryl group is left at the trailer molecule.. Zinc phosphodiesterase, which displays some tRNA 3'-processing endonuclease activity. Probably involved in tRNA maturation, by removing a 3'-trailer from precursor tRNA. The polypeptide is Ribonuclease Z (Staphylococcus aureus (strain bovine RF122 / ET3-1)).